The following is a 670-amino-acid chain: Carnitine O-acetyltransferase, mitochondrial (670 aa).

His378 (proton acceptor) is an active-site residue. Residues Lys461 and Lys465 to Asp472 each bind CoA. Tyr494 is a (R)-carnitine binding site. CoA is bound at residue Ser498. (R)-carnitine is bound at residue Thr507. Gln597 is a CoA binding site. Residues Ala668 to Leu670 carry the Microbody targeting signal motif.

Belongs to the carnitine/choline acetyltransferase family.

Its subcellular location is the mitochondrion inner membrane. It is found in the peroxisome. It catalyses the reaction (R)-carnitine + acetyl-CoA = O-acetyl-(R)-carnitine + CoA. Its function is as follows. Carnitine acetylase is specific for short chain fatty acids. Carnitine acetylase seems to affect the flux through the pyruvate dehydrogenase complex. It may be involved as well in the transport of acetyl-CoA into mitochondria. This is Carnitine O-acetyltransferase, mitochondrial (CAT2) from Saccharomyces cerevisiae (strain ATCC 204508 / S288c) (Baker's yeast).